We begin with the raw amino-acid sequence, 425 residues long: Oxytetracycline polyketide putative beta-ketoacyl synthase 1 (425 aa).

The region spanning 7 to 420 (ARRVVITGIG…GFQSAIVLTE (414 aa)) is the Ketosynthase family 3 (KS3) domain. Residues cysteine 173, histidine 313, and histidine 350 each act as for beta-ketoacyl synthase activity in the active site.

It belongs to the thiolase-like superfamily. Beta-ketoacyl-ACP synthases family.

The protein operates within antibiotic biosynthesis; oxytetracycline biosynthesis. The sequence is that of Oxytetracycline polyketide putative beta-ketoacyl synthase 1 from Streptomyces rimosus.